A 315-amino-acid polypeptide reads, in one-letter code: Ferrochelatase (315 aa).

Residues H193 and E273 each coordinate Fe cation.

It belongs to the ferrochelatase family.

The protein localises to the cytoplasm. The catalysed reaction is heme b + 2 H(+) = protoporphyrin IX + Fe(2+). It participates in porphyrin-containing compound metabolism; protoheme biosynthesis; protoheme from protoporphyrin-IX: step 1/1. Catalyzes the ferrous insertion into protoporphyrin IX. The chain is Ferrochelatase from Wolbachia pipientis wMel.